Here is a 30-residue protein sequence, read N- to C-terminus: Cyclotide hyen-H (30 aa).

The segment at residues 1 to 30 is a cross-link (cyclopeptide (Lys-Asp)); the sequence is KIPCGESCVYIPCISSVLGCSCSNKVCYKD. 3 cysteine pairs are disulfide-bonded: C4/C20, C8/C22, and C13/C27.

In terms of processing, this is a cyclic peptide. Detected in stems (at protein level).

Probably participates in a plant defense mechanism. This Pigea enneasperma (Spade flower) protein is Cyclotide hyen-H.